The sequence spans 113 residues: Hydrogenase maturation factor HypA (113 aa).

His2 serves as a coordination point for Ni(2+). Zn(2+) contacts are provided by Cys73, Cys76, Cys89, and Cys92.

Belongs to the HypA/HybF family.

Its function is as follows. Involved in the maturation of [NiFe] hydrogenases. Required for nickel insertion into the metal center of the hydrogenase. This Cereibacter sphaeroides (Rhodobacter sphaeroides) protein is Hydrogenase maturation factor HypA.